Reading from the N-terminus, the 708-residue chain is MEGIKQTFQRCKAQNRAALVTYVTAGFPHPEQTPDILLAMEKGGADVIELGVPFTDPIADGPTIQTANTIALQHGVTLQSTLQMVRDARQRGLKAPVMLMGYYNPLLSYGEERLLNDCKEAGVNGFIIVDLPPEEAVSFRQLCTRGGLSYVPLIAPATSDARMRVLCQLADSFIYVVSRQGVTGASGTLNANLPELLARVKKYSGNKPAAVGFGVSTHDHFTQVGAIADGVVVGSMIITTIQKAAKGEEVKAVQEYCSYLCGRNFEQSAHELNMGEALEAAKEPVGTATVDGVITEADIDAQLAALHGTIPKRFGEFGGQYVPEALMDCLSELEEGFNKIKDDPAFWEEYRSYYPWMGRPGQLHKAERLTEYAGGANIWLKREDLNHTGSHKINNALGQLLLARRLGKKKIIAETGAGQHGVATATVCAKFGMECTVFMGAEDVRRQALNVFRMKLLGAKVVAVEAGSRTLRDAVNEALRYWVVNLADTHYIIGSAIGPHPFPTIVRTFQSVIGNETKQQMLEKRGKLPDAVVACVGGGSNAVGMFYPFSNDPSVKLLGVEAGGDGVDTPRHSATLTAGSKGVLHGVRTYILQNQYGQIEDTHSISAGLDYPGVGPELSNWKDTERAKFVAATDAQAFEGFRLMSQLEGIIPALESSHGIWGALELAKTMKPDEDVVICLSGRGDKDVQSVADELPIIGPKIGWDLRF.

The tract at residues 1-305 (MEGIKQTFQR…EADIDAQLAA (305 aa)) is tryptophan synthase alpha chain. Active-site proton acceptor residues include E49 and D60. The tryptophan synthase beta chain stretch occupies residues 306-708 (LHGTIPKRFG…GPKIGWDLRF (403 aa)). K392 is subject to N6-(pyridoxal phosphate)lysine.

The protein in the N-terminal section; belongs to the TrpA family. In the C-terminal section; belongs to the TrpB family. The cofactor is pyridoxal 5'-phosphate.

The catalysed reaction is (1S,2R)-1-C-(indol-3-yl)glycerol 3-phosphate + L-serine = D-glyceraldehyde 3-phosphate + L-tryptophan + H2O. It participates in amino-acid biosynthesis; L-tryptophan biosynthesis; L-tryptophan from chorismate: step 5/5. The chain is Tryptophan synthase (trp-3) from Neurospora crassa (strain ATCC 24698 / 74-OR23-1A / CBS 708.71 / DSM 1257 / FGSC 987).